The following is a 314-amino-acid chain: tRNA pseudouridine synthase B (314 aa).

The active-site Nucleophile is aspartate 47.

The protein belongs to the pseudouridine synthase TruB family. Type 1 subfamily.

It carries out the reaction uridine(55) in tRNA = pseudouridine(55) in tRNA. In terms of biological role, responsible for synthesis of pseudouridine from uracil-55 in the psi GC loop of transfer RNAs. This chain is tRNA pseudouridine synthase B, found in Vibrio campbellii (strain ATCC BAA-1116).